The sequence spans 597 residues: LGASRLGPSPGCLAVASAAKLGSVYTEGGFVEGVNKKLSLFGDSIDIFKGIPFAAAPKALEKPERHPGWQGTLKAKSFKKRCLQATLTQDSTYGNEDCLYLNIWVPQGRKEVSHDLPVMIWIYGGAFLMGASQGANFLSNYLYDGEEIATRGNVIVVTFNYRVGPLGFLSTGDSNLPGNYGLWDQHMAIAWVKRNIEAFGGDPDNITLFGESAGGASVSLQTLSPYNKGLIKRAISQSGVGLCPWAIQQDPLFWAKRIAEKVGCPVDDTSKMAGCLKITDPRALTLAYKLPLGSTEYPKLHYLSFVPVIDGDFIPDDPVNLYANAADVDYIAGTNDMDGHLFVGMDVPAINSNKQDVTEEDFYKLVSGLTVTKGLRGANATYEVYTEPWAQDSSQETRKKTMVDLETDILFLIPTKIAVAQHKSHAKSANTYTYLFSQPSRMPIYPKWMGADHADDLQYVFGKPFATPLGYRAQDRTVSKAMIAYWTNFARTGDPNTGHSTVPANWDPYTLEDDNYLEINKQMDSNSMKLHLRTNYLQFWTQTYQALPTVTSAGASLLPPEDNSQASPVPPADNSGAPTEPSAGDSEVAQMPVVIGF.

The N-terminal stretch at 1-18 (LGASRLGPSPGCLAVASA) is a signal peptide. A disulfide bridge connects residues cysteine 82 and cysteine 98. Asparagine 205 carries an N-linked (GlcNAc...) asparagine glycan. The active-site Acyl-ester intermediate is the serine 212. A disulfide bridge links cysteine 264 with cysteine 275. Aspartate 338 acts as the Charge relay system in catalysis. Asparagine 379 carries an N-linked (GlcNAc...) asparagine glycan. Histidine 453 serves as the catalytic Charge relay system. Residues 553–591 (AGASLLPPEDNSQASPVPPADNSGAPTEPSAGDSEVAQM) form a disordered region.

Belongs to the type-B carboxylesterase/lipase family. In terms of assembly, interacts with CLC.

The protein resides in the secreted. It carries out the reaction a triacylglycerol + H2O = a diacylglycerol + a fatty acid + H(+). The enzyme catalyses 1,2,3-tri-(9Z-octadecenoyl)-glycerol + H2O = di-(9Z)-octadecenoylglycerol + (9Z)-octadecenoate + H(+). It catalyses the reaction 1,2,3-trioctanoylglycerol + H2O = dioctanoylglycerol + octanoate + H(+). The catalysed reaction is a sterol ester + H2O = a sterol + a fatty acid + H(+). It carries out the reaction cholesteryl (9Z-octadecenoate) + H2O = cholesterol + (9Z)-octadecenoate + H(+). The enzyme catalyses an acetyl ester + H2O = an aliphatic alcohol + acetate + H(+). It catalyses the reaction a butanoate ester + H2O = an aliphatic alcohol + butanoate + H(+). The catalysed reaction is 9-hexadecanoyloxy-octadecanoate + H2O = 9-hydroxy-octadecanoate + hexadecanoate + H(+). It carries out the reaction 9-(9Z-octadecenoyloxy)-octadecanoate + H2O = 9-hydroxy-octadecanoate + (9Z)-octadecenoate + H(+). The enzyme catalyses 1-hexadecanoyl-sn-glycero-3-phosphocholine + H2O = sn-glycerol 3-phosphocholine + hexadecanoate + H(+). It catalyses the reaction 12-hexadecanoyloxy-octadecanoate + H2O = 12-hydroxyoctadecanoate + hexadecanoate + H(+). The catalysed reaction is 12-(9Z-octadecenoyloxy)-octadecanoate + H2O = 12-hydroxyoctadecanoate + (9Z)-octadecenoate + H(+). It carries out the reaction 13-(9Z-octadecenoyloxy)-octadecanoate + H2O = 13-hydroxy-octadecanoate + (9Z)-octadecenoate + H(+). The enzyme catalyses 9-(9Z-hexadecenoyloxy)-octadecanoate + H2O = (9Z)-hexadecenoate + 9-hydroxy-octadecanoate + H(+). It catalyses the reaction 12-(9Z-hexadecenoyloxy)-octadecanoate + H2O = 12-hydroxyoctadecanoate + (9Z)-hexadecenoate + H(+). The catalysed reaction is 13-(9Z-hexadecenoyloxy)-octadecanoate + H2O = 13-hydroxy-octadecanoate + (9Z)-hexadecenoate + H(+). It carries out the reaction 12-octadecanoyloxy-octadecanoate + H2O = 12-hydroxyoctadecanoate + octadecanoate + H(+). The enzyme catalyses 13-octadecanoyloxy-octadecanoate + H2O = 13-hydroxy-octadecanoate + octadecanoate + H(+). It catalyses the reaction 5-(9Z-hexadecenoyloxy)-octadecanoate + H2O = 5-hydroxy-octadecanoate + (9Z)-hexadecenoate + H(+). The catalysed reaction is 9-octadecanoyloxy-octadecanoate + H2O = 9-hydroxy-octadecanoate + octadecanoate + H(+). Activated by bile salts such as sodium taurocholate. In terms of biological role, catalyzes the hydrolysis of a wide range of substrates including cholesteryl esters, phospholipids, lysophospholipids, di- and tri-acylglycerols, and fatty acid esters of hydroxy fatty acids (FAHFA). Preferentially hydrolyzes FAHFAs with the ester bond further away from the carboxylate. Unsaturated FAHFAs are hydrolyzed more quickly than saturated FAHFAs. Has an essential role in the complete digestion of dietary lipids and their intestinal absorption, along with the absorption of fat-soluble vitamins. The chain is Bile salt-activated lipase (CEL) from Bos taurus (Bovine).